The chain runs to 2179 residues: MMMMMMMKKMQHQRQHQEDHANEANYARGTRLPISGEGPTSQPNSSKQTVLSWQAAIDAARQAKAAQTMSTSAPPPVGSLSQRKRQQYAKSKKQGNSSNSRPARALFCLSLNNPIRRACISIVEWKPFDIFILLAIFANCVALAIYIPFPEDDSNSTNHNLEKVEYAFLIIFTVETFLKIIAYGLLLHPNAYVRNGWNLLDFVIVIVGLFSVILEQLTKETEGGNHSSGKSGGFDVKALRAFRVLRPLRLVSGVPSLQVVLNSIIKAMVPLLHIALLVLFVIIIYAIIGLELFIGKMHKTCFFADSDIVAEEDPAPCAFSGNGRQCTANGTECRSGWVGPNGGITNFDNFAFAMLTVFQCITMEGWTDVLYWVNDAIGWEWPWVYFVSLIILGSFFVLNLVLGVLSGEFSKEREKAKARGDFQKLREKQQLEEDLKGYLDWITQAEDIDPENEEEGGEEGKRNTSMPTSETESVNTENVSGEGETQGCCGTLWCWWKRRGAAKTGPSGCRRWGQAISKSKLSRRWRRWNRFNRRRCRAAVKSVTFYWLVIVLVFLNTLTISSEHYNQPDWLTQIQDIANKVLLALFTCEMLVKMYSLGLQAYFVSLFNRFDCFVVCGGITETILVELELMSPLGVSVFRCVRLLRIFKVTRHWTSLSNLVASLLNSMKSIASLLLLLFLFIIIFSLLGMQLFGGKFNFDETQTKRSTFDNFPQALLTVFQILTGEDWNAVMYDGIMAYGGPSSSGMIVCIYFIILFICGNYILLNVFLAIAVDNLADAESLNTAQKEEAEEKERKKIARKESLENKKNNKPEVNQIANSDNKVTIDDYQEDAEDKDPYPPCDVPVGEEEEEEEEDEPEVPAGPRPRRISELNMKEKIAPIPEGSAFFILSKTNPIRVGCHKLINHHIFTNLILVFIMLSSAALAAEDPIRSHSFRNTILGYFDYAFTAIFTVEILLKMTTFGAFLHKGAFCRNYFNLLDMLVVGVSLVSFGIQSSAISVVKILRVLRVLRPLRAINRAKGLKHVVQCVFVAIRTIGNIMIVTTLLQFMFACIGVQLFKGKFYRCTDEAKSNPEECRGLFILYKDGDVDSPVVRERIWQNSDFNFDNVLSAMMALFTVSTFEGWPALLYKAIDSNGENVGPVYNYRVEISIFFIIYIIIVAFFMMNIFVGFVIVTFQEQGEKEYKNCELDKNQRQCVEYALKARPLRRYIPKNPYQYKFWYVVNSSPFEYMMFVLIMLNTLCLAMQHYEQSKMFNDAMDILNMVFTGVFTVEMVLKVIAFKPKGYFSDAWNTFDSLIVIGSIIDVALSEADPSESETIPLPTATPGNSEESNRISITFFRLFRVMRLVKLLSRGEGIRTLLWTFIKSFQALPYVALLIAMLFFIYAVIGMQMFGKVAMRDNNQINRNNNFQTFPQAVLLLFRCATGEAWQEIMLACLPGKLCDPDSDYNPGEEYTCGSNFAIVYFISFYMLCAFLIINLFVAVIMDNFDYLTRDWSILGPHHLDEFKRIWSEYDPEAKGRIKHLDVVTLLRRIQPPLGFGKLCPHRVACKRLVAMNMPLNSDGTVMFNATLFALVRTALKIKTEGNLEQANEELRAVIKKIWKKTSMKLLDQVVPPAGDDEVTVGKFYATFLIQDYFRKFKKRKEQGLVGKYPAKNTTIALQAGLRTLHDIGPEIRRAISCDLQDDEPEDSKPEEEDVFKRNGALLGNHVNHVNSDRRDSLQQTNTTHRPLHVQRPSMPPASDTEKPLFPPAGNSGCHNHHNHNSIGKQAPTSTNANLNNANMSKAAHGKPPSIGNLEHVSENGHYSCKHDRELQRRSSIKRTRYYETYIRSESGDEQFPTICREDPEIHGYFRDPRCLGEQEYFSSEECCEDDSSPTWSRQNYNYYNRYPGSSMDFERPRGYHHPQGFLEDDDSPTGYDSRRSPRRRLLPPTPPSHRRSSFNFECLRRQSSQDDVLPSPALPHRAALPLHLMQQQIMAVAGLDSSKAQKYSPSHSTRSWATPPATPPYRDWSPCYTPLIQVDRSESMDQVNGSLPSLHRSSWYTDEPDISYRTFTPASLTVPSSFRNKNSDKQRSADSLVEAVLISEGLGRYARDPKFVSATKHEIADACDLTIDEMESAASTLLNGSVCPRANGDMGPISHRQDYELQDFGPGYSDEEPDPGREEEDLADEMICITTL.

Disordered stretches follow at residues 1 to 21 (MMMM…EDHA), 30 to 49 (TRLP…SKQT), and 64 to 100 (KAAQ…SSNS). The Cytoplasmic portion of the chain corresponds to 1 to 126 (MMMMMMMKKM…RACISIVEWK (126 aa)). Residues 38-49 (GPTSQPNSSKQT) show a composition bias toward polar residues. Residues 82–93 (QRKRQQYAKSKK) are compositionally biased toward basic residues. An I repeat occupies 113-409 (NPIRRACISI…LVLGVLSGEF (297 aa)). The helical transmembrane segment at 127 to 145 (PFDIFILLAIFANCVALAI) threads the bilayer. Residues 146-163 (YIPFPEDDSNSTNHNLEK) lie on the Extracellular side of the membrane. A helical membrane pass occupies residues 164–183 (VEYAFLIIFTVETFLKIIAY). The Cytoplasmic segment spans residues 184-195 (GLLLHPNAYVRN). The chain crosses the membrane as a helical span at residues 196–214 (GWNLLDFVIVIVGLFSVIL). Topologically, residues 215-235 (EQLTKETEGGNHSSGKSGGFD) are extracellular. A helical transmembrane segment spans residues 236–254 (VKALRAFRVLRPLRLVSGV). At 255 to 273 (PSLQVVLNSIIKAMVPLLH) the chain is on the cytoplasmic side. Residues 274–293 (IALLVLFVIIIYAIIGLELF) traverse the membrane as a helical segment. Over 294–381 (IGKMHKTCFF…WVNDAIGWEW (88 aa)) the chain is Extracellular. Residue Glu-364 coordinates Ca(2+). Residues 382-406 (PWVYFVSLIILGSFFVLNLVLGVLS) form a helical membrane-spanning segment. At 407–543 (GEFSKEREKA…RRCRAAVKSV (137 aa)) the chain is on the cytoplasmic side. Positions 429–446 (QQLEEDLKGYLDWITQAE) are binding to the beta subunit. The tract at residues 449–480 (DPENEEEGGEEGKRNTSMPTSETESVNTENVS) is disordered. The segment covering 463 to 479 (NTSMPTSETESVNTENV) has biased composition (polar residues). One copy of the II repeat lies at 529 to 775 (NRFNRRRCRA…VFLAIAVDNL (247 aa)). The helical transmembrane segment at 544 to 563 (TFYWLVIVLVFLNTLTISSE) threads the bilayer. Topologically, residues 564 to 578 (HYNQPDWLTQIQDIA) are extracellular. Residues 579-597 (NKVLLALFTCEMLVKMYSL) form a helical membrane-spanning segment. Residues 598 to 605 (GLQAYFVS) are Cytoplasmic-facing. The chain crosses the membrane as a helical span at residues 606-624 (LFNRFDCFVVCGGITETIL). Topologically, residues 625–634 (VELELMSPLG) are extracellular. Residues 635 to 653 (VSVFRCVRLLRIFKVTRHW) traverse the membrane as a helical segment. Residues 654–672 (TSLSNLVASLLNSMKSIAS) are Cytoplasmic-facing. The helical transmembrane segment at 673 to 693 (LLLLLFLFIIIFSLLGMQLFG) threads the bilayer. The Extracellular portion of the chain corresponds to 694-747 (GKFNFDETQTKRSTFDNFPQALLTVFQILTGEDWNAVMYDGIMAYGGPSSSGMI). Glu-725 is a binding site for Ca(2+). A helical transmembrane segment spans residues 748-772 (VCIYFIILFICGNYILLNVFLAIAV). The stretch at 771-810 (AVDNLADAESLNTAQKEEAEEKERKKIARKESLENKKNNK) forms a coiled coil. The Cytoplasmic segment spans residues 773–906 (DNLADAESLN…VGCHKLINHH (134 aa)). The span at 786–810 (KEEAEEKERKKIARKESLENKKNNK) shows a compositional bias: basic and acidic residues. Residues 786 to 870 (KEEAEEKERK…AGPRPRRISE (85 aa)) form a disordered region. Positions 811–822 (PEVNQIANSDNK) are enriched in polar residues. Positions 845-858 (VGEEEEEEEEDEPE) are enriched in acidic residues. The III repeat unit spans residues 893-1175 (NPIRVGCHKL…IFVGFVIVTF (283 aa)). Residues 907–925 (IFTNLILVFIMLSSAALAA) traverse the membrane as a helical segment. At 926 to 941 (EDPIRSHSFRNTILGY) the chain is on the extracellular side. The helical transmembrane segment at 942 to 961 (FDYAFTAIFTVEILLKMTTF) threads the bilayer. At 962–973 (GAFLHKGAFCRN) the chain is on the cytoplasmic side. Residues 974–992 (YFNLLDMLVVGVSLVSFGI) form a helical membrane-spanning segment. The Extracellular segment spans residues 993 to 998 (QSSAIS). Residues 999-1018 (VVKILRVLRVLRPLRAINRA) traverse the membrane as a helical segment. Residues 1019-1037 (KGLKHVVQCVFVAIRTIGN) are Cytoplasmic-facing. The chain crosses the membrane as a helical span at residues 1038–1057 (IMIVTTLLQFMFACIGVQLF). The Extracellular segment spans residues 1058–1147 (KGKFYRCTDE…VGPVYNYRVE (90 aa)). The segment at 1095–1185 (RIWQNSDFNF…QEQGEKEYKN (91 aa)) is dihydropyridine binding. Glu-1121 serves as a coordination point for Ca(2+). Residues 1148–1168 (ISIFFIIYIIIVAFFMMNIFV) traverse the membrane as a helical segment. The Cytoplasmic segment spans residues 1169 to 1225 (GFVIVTFQEQGEKEYKNCELDKNQRQCVEYALKARPLRRYIPKNPYQYKFWYVVNSS). An IV repeat occupies 1212-1487 (NPYQYKFWYV…LFVAVIMDNF (276 aa)). Residues 1226–1244 (PFEYMMFVLIMLNTLCLAM) form a helical membrane-spanning segment. At 1245-1259 (QHYEQSKMFNDAMDI) the chain is on the extracellular side. A helical transmembrane segment spans residues 1260 to 1279 (LNMVFTGVFTVEMVLKVIAF). Residues 1280–1286 (KPKGYFS) are Cytoplasmic-facing. Residues 1287–1308 (DAWNTFDSLIVIGSIIDVALSE) form a helical membrane-spanning segment. The Extracellular segment spans residues 1309-1333 (ADPSESETIPLPTATPGNSEESNRI). A helical membrane pass occupies residues 1334–1353 (SITFFRLFRVMRLVKLLSRG). The Cytoplasmic segment spans residues 1354 to 1372 (EGIRTLLWTFIKSFQALPY). A helical transmembrane segment spans residues 1373–1392 (VALLIAMLFFIYAVIGMQMF). Topologically, residues 1393-1459 (GKVAMRDNNQ…GEEYTCGSNF (67 aa)) are extracellular. The interval 1440–1506 (LCDPDSDYNP…LGPHHLDEFK (67 aa)) is dihydropyridine binding. The interval 1452–1495 (EYTCGSNFAIVYFISFYMLCAFLIINLFVAVIMDNFDYLTRDWS) is phenylalkylamine binding. A helical membrane pass occupies residues 1460–1484 (AIVYFISFYMLCAFLIINLFVAVIM). Residues 1485–2179 (DNFDYLTRDW…ADEMICITTL (695 aa)) are Cytoplasmic-facing. Disordered stretches follow at residues 1704–1789 (LLGN…AHGK), 1896–1941 (FERP…RSSF), and 2135–2171 (GDMG…DLAD). Residues 1764–1782 (SIGKQAPTSTNANLNNANM) are compositionally biased toward polar residues. A compositionally biased stretch (acidic residues) spans 2156–2171 (SDEEPDPGREEEDLAD).

This sequence belongs to the calcium channel alpha-1 subunit (TC 1.A.1.11) family. CACNA1D subfamily. In terms of assembly, voltage-dependent calcium channels are multisubunit complexes, consisting of alpha-1, alpha-2, beta and delta subunits in a 1:1:1:1 ratio. The channel activity is directed by the pore-forming and voltage-sensitive alpha-1 subunit. In many cases, this subunit is sufficient to generate voltage-sensitive calcium channel activity. The auxiliary subunits beta and alpha-2/delta linked by a disulfide bridge regulate the channel activity. Interacts (via IQ domain) with CABP1 and CABP4 in a calcium independent manner. Interacts with RIMBP2. Expressed in the inner hair cells (IHC) of the cochlea.

The protein resides in the membrane. It catalyses the reaction Ca(2+)(in) = Ca(2+)(out). Voltage-sensitive calcium channels (VSCC) mediate the entry of calcium ions into excitable cells and are also involved in a variety of calcium-dependent processes, including muscle contraction, hormone or neurotransmitter release, gene expression, cell motility, cell division and cell death. The isoform alpha-1D gives rise to L-type calcium currents. Long-lasting (L-type) calcium channels belong to the 'high-voltage activated' (HVA) group. They are blocked by dihydropyridines (DHP), phenylalkylamines, and by benzothiazepines. In Mus musculus (Mouse), this protein is Voltage-dependent L-type calcium channel subunit alpha-1D (Cacna1d).